Consider the following 238-residue polypeptide: Dolichyldiphosphatase 1 (238 aa).

A run of 4 helical transmembrane segments spans residues 33-53 (LAYLSLSPIFVVVGFLTLIIF), 100-120 (PSSHSQFMWFFSVYSFLFLYL), 130-150 (FLDLLWRHVLSLGLLTAAFLV), and 162-182 (WSQVFYGGVAGSLMAVAWFII).

It belongs to the dolichyldiphosphatase family. As to expression, widely expressed with highest levels in brain, kidney, lung and intestine.

It localises to the endoplasmic reticulum membrane. It carries out the reaction a di-trans,poly-cis-dolichyl diphosphate + H2O = a di-trans,poly-cis-dolichyl phosphate + phosphate + H(+). Its pathway is protein modification; protein glycosylation. Required for efficient N-glycosylation. Necessary for maintaining optimal levels of dolichol-linked oligosaccharides. Hydrolyzes dolichyl pyrophosphate at a very high rate and dolichyl monophosphate at a much lower rate. Does not act on phosphatidate. This Mus musculus (Mouse) protein is Dolichyldiphosphatase 1 (Dolpp1).